Reading from the N-terminus, the 518-residue chain is Glutamate--cysteine ligase (518 aa).

This sequence belongs to the glutamate--cysteine ligase type 1 family. Type 1 subfamily.

The enzyme catalyses L-cysteine + L-glutamate + ATP = gamma-L-glutamyl-L-cysteine + ADP + phosphate + H(+). Its pathway is sulfur metabolism; glutathione biosynthesis; glutathione from L-cysteine and L-glutamate: step 1/2. This is Glutamate--cysteine ligase from Cronobacter sakazakii (strain ATCC BAA-894) (Enterobacter sakazakii).